The following is a 451-amino-acid chain: MFNNLTQRLSDSLKKILNKGRLTEENIKETIREVRKALLEADVALSVIKKFIENVKKKSIGHEINKSLTPGQEFIKIVKHELIFAMGEKNHSLNFSIEPPAVILVVGLQGSGKTTSLAKLGKWIKNKYKKKILITSTDTYRAAAIEQLKILSDQIEIDFFESDKHHTPIEITKNAIKYAKLKLYDVLLIDTAGRLHIDKKMMNEIQQIQVISKAIETLLIVDSMMGQDAINMAKIFNNDLLISGIILTKTDGDSRSGIALSMRYITGKPIKFIGTGEKIISLEPFHPERIADRILGMNDIMSLIEDIEEKVDQSQIQKLTKKLKKGHDFNLNDFLTQIKQMKKIGGLNYFANKFSINHQLSNNISLLNTDKNTLKKIEAMICSMTPKERIKPIIIKGSRKRRIALGSGTQIQDVNKLLKNFDDIRRIMKKIKTDGIAKVIRGIKNMLPKKF.

GTP-binding positions include 107–114, 190–194, and 248–251; these read GLQGSGKT, DTAGR, and TKTD.

Belongs to the GTP-binding SRP family. SRP54 subfamily. Part of the signal recognition particle protein translocation system, which is composed of SRP and FtsY. SRP is a ribonucleoprotein composed of Ffh and a 4.5S RNA molecule.

Its subcellular location is the cytoplasm. It carries out the reaction GTP + H2O = GDP + phosphate + H(+). In terms of biological role, involved in targeting and insertion of nascent membrane proteins into the cytoplasmic membrane. Binds to the hydrophobic signal sequence of the ribosome-nascent chain (RNC) as it emerges from the ribosomes. The SRP-RNC complex is then targeted to the cytoplasmic membrane where it interacts with the SRP receptor FtsY. Interaction with FtsY leads to the transfer of the RNC complex to the Sec translocase for insertion into the membrane, the hydrolysis of GTP by both Ffh and FtsY, and the dissociation of the SRP-FtsY complex into the individual components. This Buchnera aphidicola subsp. Acyrthosiphon pisum (strain APS) (Acyrthosiphon pisum symbiotic bacterium) protein is Signal recognition particle protein.